The chain runs to 265 residues: Cytochrome c oxidase subunit 3 (265 aa).

A run of 8 helical transmembrane segments spans residues 16 to 36, 41 to 61, 84 to 104, 115 to 135, 137 to 157, 162 to 182, 200 to 220, and 245 to 265; these read PWPISGSLGALATTVGGVMYM, GGATLLSLGLIFILYTMFVWW, YGSIPFIVSEVMFLFAFFWAS, IGGIWPPLGIWVLDPWEIPFL, TPILLSSGAAVTWAHHAILAG, AVYALVATVSLALVFTGFQGM, FFLATGFHGFHVIIGTLFLII, and WHFVDVVWLFLFVSIYWWGGI.

The protein belongs to the cytochrome c oxidase subunit 3 family. Component of the cytochrome c oxidase (complex IV, CIV), a multisubunit enzyme composed of a catalytic core of 3 subunits and several supernumerary subunits. The complex exists as a monomer or a dimer and forms supercomplexes (SCs) in the inner mitochondrial membrane with ubiquinol-cytochrome c oxidoreductase (cytochrome b-c1 complex, complex III, CIII).

It is found in the mitochondrion inner membrane. It carries out the reaction 4 Fe(II)-[cytochrome c] + O2 + 8 H(+)(in) = 4 Fe(III)-[cytochrome c] + 2 H2O + 4 H(+)(out). Component of the cytochrome c oxidase, the last enzyme in the mitochondrial electron transport chain which drives oxidative phosphorylation. The respiratory chain contains 3 multisubunit complexes succinate dehydrogenase (complex II, CII), ubiquinol-cytochrome c oxidoreductase (cytochrome b-c1 complex, complex III, CIII) and cytochrome c oxidase (complex IV, CIV), that cooperate to transfer electrons derived from NADH and succinate to molecular oxygen, creating an electrochemical gradient over the inner membrane that drives transmembrane transport and the ATP synthase. Cytochrome c oxidase is the component of the respiratory chain that catalyzes the reduction of oxygen to water. Electrons originating from reduced cytochrome c in the intermembrane space (IMS) are transferred via the dinuclear copper A center (CU(A)) of subunit 2 and heme A of subunit 1 to the active site in subunit 1, a binuclear center (BNC) formed by heme A3 and copper B (CU(B)). The BNC reduces molecular oxygen to 2 water molecules using 4 electrons from cytochrome c in the IMS and 4 protons from the mitochondrial matrix. This Glycine max (Soybean) protein is Cytochrome c oxidase subunit 3 (COX3).